The sequence spans 363 residues: Dihydroorotate dehydrogenase (quinone) (363 aa).

FMN contacts are provided by residues 77 to 81 and T101; that span reads AGMDK. Residue K81 coordinates substrate. 126–130 provides a ligand contact to substrate; that stretch reads NRMGF. FMN is bound by residues S155 and N188. A substrate-binding site is contributed by N188. The active-site Nucleophile is S191. Substrate is bound at residue N193. Positions 234 and 262 each coordinate FMN. 263–264 lines the substrate pocket; that stretch reads NT. FMN-binding positions include G287, G316, and 337–338; that span reads YT.

It belongs to the dihydroorotate dehydrogenase family. Type 2 subfamily. Monomer. FMN is required as a cofactor.

The protein resides in the cell membrane. It carries out the reaction (S)-dihydroorotate + a quinone = orotate + a quinol. It functions in the pathway pyrimidine metabolism; UMP biosynthesis via de novo pathway; orotate from (S)-dihydroorotate (quinone route): step 1/1. Catalyzes the conversion of dihydroorotate to orotate with quinone as electron acceptor. The polypeptide is Dihydroorotate dehydrogenase (quinone) (Chloroflexus aurantiacus (strain ATCC 29366 / DSM 635 / J-10-fl)).